Here is a 624-residue protein sequence, read N- to C-terminus: MNCNSNKYPILGLINTPKELRQLSEDHLAKLCNELRQFLLTSVSKSSGHFASGLGTIELTVALHYVYNTPFDYLIWDVGHQAYPHKILTGRRERIFSIRRKNGLHPFPCRDESEYDVLSVGHSSTSISAGLGLAIAAEREMLGRRTVCVIGDGAITAGMAFEAMNHAGFTKSDLLIILNDNEMSISENVGALNNHHTHILSKKVYSNLKVDNNKILSDVLSTNTLIKHIGNQIKNFNGTSSSLFSQLGFNYIGPVNGHDVLELVYILRNIRDMKGPQFLHIITKKGCGYEPAEKDPIKWHAVPKFNPESGSLPVEHSKNITYSAIFGDWLCQVAARDNKIIGITPAMREGSGMSIFSQKYPKQYFDVAIAEQHAVTFAAGLAIAGYKPIVAIYSTFLQRAYDQVIHDVAIQNLPVLFAVDRGGIVGADGQTHQGAFDLSYLRCIPNMIIMTPSDACECKLMLYTGYRYRYGPSVVRYPKGYAVPGNLADTTKLYTLPLSKGVIRRQGNCIAILNFGTLLQSAYNVASKLNATLVDMRFVKPLDENLIKTLAKNHQVLITLEENTVMGGAGSGVNEFIMQNKLSIPVLNIGLPDFFISQGSQSEILSELGLDSIGIYKKIIKWIH.

Thiamine diphosphate is bound by residues H80 and 121–123 (GHS). D152 contributes to the Mg(2+) binding site. Thiamine diphosphate is bound by residues 153–154 (GA), N181, Y289, and E371. Residue N181 participates in Mg(2+) binding.

Belongs to the transketolase family. DXPS subfamily. In terms of assembly, homodimer. It depends on Mg(2+) as a cofactor. Thiamine diphosphate serves as cofactor.

The enzyme catalyses D-glyceraldehyde 3-phosphate + pyruvate + H(+) = 1-deoxy-D-xylulose 5-phosphate + CO2. Its pathway is metabolic intermediate biosynthesis; 1-deoxy-D-xylulose 5-phosphate biosynthesis; 1-deoxy-D-xylulose 5-phosphate from D-glyceraldehyde 3-phosphate and pyruvate: step 1/1. Catalyzes the acyloin condensation reaction between C atoms 2 and 3 of pyruvate and glyceraldehyde 3-phosphate to yield 1-deoxy-D-xylulose-5-phosphate (DXP). This is 1-deoxy-D-xylulose-5-phosphate synthase from Blochmanniella pennsylvanica (strain BPEN).